The sequence spans 298 residues: Cholesterol 25-hydroxylase (298 aa).

Asparagine 5 carries N-linked (GlcNAc...) asparagine glycosylation. Transmembrane regions (helical) follow at residues 38–58, 84–104, and 124–144; these read FFPV…FVVL, LLPC…PVTL, and LLSH…AWHL. Residues 128 to 263 form the Fatty acid hydroxylase domain; that stretch reads VLICLLLFDT…FTHWDKMLGT (136 aa). Residues 142 to 146 carry the Histidine box-1 motif; the sequence is WHLLH. Positions 157–161 match the Histidine box-2 motif; the sequence is HKVHH. The N-linked (GlcNAc...) asparagine glycan is linked to asparagine 163. 2 helical membrane-spanning segments follow: residues 167–187 and 190–210; these read FALA…FFDV and VAML…NIWL. The short motif at 238–244 is the Histidine box-3 element; the sequence is HHDLHHS.

The protein belongs to the sterol desaturase family. The cofactor is Fe cation. Post-translationally, N-glycosylated. As to expression, expressed in testicular macrophages at all stages, with the highest level in 10 day old animals.

It is found in the endoplasmic reticulum membrane. It catalyses the reaction cholesterol + AH2 + O2 = 25-hydroxycholesterol + A + H2O. It carries out the reaction cholesterol + NADPH + O2 + H(+) = 25-hydroxycholesterol + NADP(+) + H2O. Its function is as follows. Catalyzes the formation of 25-hydroxycholesterol from cholesterol, leading to repress cholesterol biosynthetic enzymes. Plays a key role in cell positioning and movement in lymphoid tissues: 25-hydroxycholesterol is an intermediate in biosynthesis of 7-alpha,25-dihydroxycholesterol (7-alpha,25-OHC), an oxysterol that acts as a ligand for the G protein-coupled receptor GPR183/EBI2, a chemotactic receptor for a number of lymphoid cells. May play an important role in regulating lipid metabolism by synthesizing a corepressor that blocks sterol regulatory element binding protein (SREBP) processing. In testis, production of 25-hydroxycholesterol by macrophages plays a role in Leydig cell differentiation. Required to restrain inflammation in macrophages: production of 25-hydroxycholesterol protects macrophages from cholesterol overload, thereby preventing mitochondrial DNA release and subsequent activation of the AIM2 inflammasome. Interferon-stimulated gene which has broad antiviral activities against a wide range of enveloped viruses. Catalyzes the formation of 25-hydroxycholesterol from cholesterol, leading to repress cholesterol biosynthetic enzymes. Plays a key role in cell positioning and movement in lymphoid tissues: 25-hydroxycholesterol is an intermediate in biosynthesis of 7-alpha,25-dihydroxycholesterol (7-alpha,25-OHC), an oxysterol that acts as a ligand for the G protein-coupled receptor GPR183/EBI2, a chemotactic receptor for a number of lymphoid cells. May play an important role in regulating lipid metabolism by synthesizing a corepressor that blocks sterol regulatory element binding protein (SREBP) processing. As an interferon-stimulated gene, has broad antiviral activities against a wide range of enveloped viruses. Its product, 25-hydroxycholesterol, activates the ER-localized enzyme ACAT to induce internalization of accessible cholesterol on the plasma membrane and restricts virus-host membranes fusion which inhibits virus replication. In testis, production of 25-hydroxycholesterol by macrophages plays a role in Leydig cell differentiation. The polypeptide is Cholesterol 25-hydroxylase (Rattus norvegicus (Rat)).